A 249-amino-acid polypeptide reads, in one-letter code: 2,3,4,5-tetrahydropyridine-2,6-dicarboxylate N-acetyltransferase (249 aa).

It belongs to the transferase hexapeptide repeat family. DapH subfamily.

The enzyme catalyses (S)-2,3,4,5-tetrahydrodipicolinate + acetyl-CoA + H2O = L-2-acetamido-6-oxoheptanedioate + CoA. It participates in amino-acid biosynthesis; L-lysine biosynthesis via DAP pathway; LL-2,6-diaminopimelate from (S)-tetrahydrodipicolinate (acetylase route): step 1/3. Catalyzes the transfer of an acetyl group from acetyl-CoA to tetrahydrodipicolinate. This chain is 2,3,4,5-tetrahydropyridine-2,6-dicarboxylate N-acetyltransferase, found in Fervidobacterium nodosum (strain ATCC 35602 / DSM 5306 / Rt17-B1).